Consider the following 320-residue polypeptide: Malate dehydrogenase (320 aa).

NAD(+) is bound by residues 10–15 and Asp-34; that span reads GSGMIG. Substrate-binding residues include Arg-83 and Arg-89. Residues Asn-96 and 119 to 121 each bind NAD(+); that span reads ITN. Substrate-binding residues include Asn-121 and Arg-152. Catalysis depends on His-176, which acts as the Proton acceptor.

Belongs to the LDH/MDH superfamily. MDH type 3 family.

It carries out the reaction (S)-malate + NAD(+) = oxaloacetate + NADH + H(+). Its function is as follows. Catalyzes the reversible oxidation of malate to oxaloacetate. In Brucella melitensis biotype 1 (strain ATCC 23456 / CCUG 17765 / NCTC 10094 / 16M), this protein is Malate dehydrogenase.